The primary structure comprises 411 residues: Aspartate kinase (411 aa).

The ACT domain maps to 265-348 (LTIRGVPDTP…KIAKVSIVGV (84 aa)).

The protein belongs to the aspartokinase family.

The protein localises to the cytoplasm. The enzyme catalyses L-aspartate + ATP = 4-phospho-L-aspartate + ADP. It participates in amino-acid biosynthesis; L-lysine biosynthesis via DAP pathway; (S)-tetrahydrodipicolinate from L-aspartate: step 1/4. Its pathway is amino-acid biosynthesis; L-methionine biosynthesis via de novo pathway; L-homoserine from L-aspartate: step 1/3. It functions in the pathway amino-acid biosynthesis; L-threonine biosynthesis; L-threonine from L-aspartate: step 1/5. Allosterically feedback inhibited by L-lysine and L-threonine individually and also subject to a concerted feedback inhibition by these amino acids. Involved in the biosynthesis of L-aspartate-beta-semialdehyde which is a central intermediate in the biosynthesis of different amino acids (L-lysine, L-methionine, L-threonine). Catalyzes the phosphorylation of the beta-carboxyl group of L-aspartate to yield 4-phospho-L-aspartate. This chain is Aspartate kinase, found in Pseudomonas putida (strain ATCC 47054 / DSM 6125 / CFBP 8728 / NCIMB 11950 / KT2440).